A 176-amino-acid chain; its full sequence is Pectinesterase inhibitor 1 (176 aa).

An N-terminal signal peptide occupies residues M1–A25. Disulfide bonds link C35-C44 and C98-C138. An N-linked (GlcNAc...) asparagine glycan is attached at N154.

It belongs to the PMEI family. Monomer and homodimer. Interacts in vitro with PPME1. As to expression, highest expression in flowers. Expressed exclusively at the pollen tube tip.

The protein localises to the secreted. Its subcellular location is the extracellular space. It localises to the apoplast. Inhibits pectin methylesterase (PME) from flowers and siliques. Inhibits PME from leaves. The chain is Pectinesterase inhibitor 1 from Arabidopsis thaliana (Mouse-ear cress).